The chain runs to 193 residues: Imidazoleglycerol-phosphate dehydratase (193 aa).

Belongs to the imidazoleglycerol-phosphate dehydratase family.

It is found in the cytoplasm. It carries out the reaction D-erythro-1-(imidazol-4-yl)glycerol 3-phosphate = 3-(imidazol-4-yl)-2-oxopropyl phosphate + H2O. Its pathway is amino-acid biosynthesis; L-histidine biosynthesis; L-histidine from 5-phospho-alpha-D-ribose 1-diphosphate: step 6/9. This Staphylococcus carnosus (strain TM300) protein is Imidazoleglycerol-phosphate dehydratase.